The sequence spans 655 residues: p-hydroxybenzoic acid efflux pump subunit AaeB (655 aa).

11 helical membrane-spanning segments follow: residues 13 to 33 (FAVK…HFQL), 38 to 58 (WAVL…GGEP), 69 to 89 (LRII…IAMI), 93 to 113 (LLMI…SSLV), 121 to 141 (WGLA…EPLL), 152 to 172 (EIVI…PRSI), 370 to 390 (LFWL…IAVV), 407 to 427 (FIYG…VIIP), 431 to 451 (QSML…GIEV), 459 to 479 (MGAL…TFHF), and 482 to 502 (FLDS…VILL).

It belongs to the aromatic acid exporter ArAE (TC 2.A.85) family.

Its subcellular location is the cell inner membrane. Forms an efflux pump with AaeA. Could function as a metabolic relief valve, allowing to eliminate certain compounds when they accumulate to high levels in the cell. This Escherichia coli O81 (strain ED1a) protein is p-hydroxybenzoic acid efflux pump subunit AaeB.